A 321-amino-acid chain; its full sequence is Acetyl-coenzyme A carboxylase carboxyl transferase subunit beta, chloroplastic (321 aa).

A CoA carboxyltransferase N-terminal domain is found at 47–321 (LWAQCDNCEN…FWFYVLRSSL (275 aa)). Residues C51, C54, C70, and C73 each coordinate Zn(2+). Residues 51–73 (CDNCENLLYLRFLRENQSVCKEC) form a C4-type zinc finger.

The protein belongs to the AccD/PCCB family. Acetyl-CoA carboxylase is a heterohexamer composed of biotin carboxyl carrier protein, biotin carboxylase and 2 subunits each of ACCase subunit alpha and ACCase plastid-coded subunit beta (accD). Requires Zn(2+) as cofactor.

Its subcellular location is the plastid. The protein localises to the chloroplast stroma. The enzyme catalyses N(6)-carboxybiotinyl-L-lysyl-[protein] + acetyl-CoA = N(6)-biotinyl-L-lysyl-[protein] + malonyl-CoA. Its pathway is lipid metabolism; malonyl-CoA biosynthesis; malonyl-CoA from acetyl-CoA: step 1/1. In terms of biological role, component of the acetyl coenzyme A carboxylase (ACC) complex. Biotin carboxylase (BC) catalyzes the carboxylation of biotin on its carrier protein (BCCP) and then the CO(2) group is transferred by the transcarboxylase to acetyl-CoA to form malonyl-CoA. The chain is Acetyl-coenzyme A carboxylase carboxyl transferase subunit beta, chloroplastic from Pinus thunbergii (Japanese black pine).